We begin with the raw amino-acid sequence, 264 residues long: MRILLTNDDGIHARGIQALIGELGSIAELFVAAPDRERSGTGHSITVFDPIKVIKAKLAGIKAGWVIGGTPVDCVKLASSKLVGDNIDLVVSGINHGPNLGTDVLYSGTVSAAVEGVIMGSPSIAVSLNSFAADTDFSFAARFTRQVIQNLFKNGMEKKTLLNINIPYLCPQDIKGIRITRLGVRNYENLFEERHDPRGNTYFWMGGGVLEEPQEEDSDVNAVQHSYISITPIHFDLTDYHLVEQYRKSFSQFSHLLGEADDNF.

A divalent metal cation-binding residues include aspartate 8, aspartate 9, serine 39, and asparagine 95.

The protein belongs to the SurE nucleotidase family. Requires a divalent metal cation as cofactor.

It is found in the cytoplasm. It carries out the reaction a ribonucleoside 5'-phosphate + H2O = a ribonucleoside + phosphate. Functionally, nucleotidase that shows phosphatase activity on nucleoside 5'-monophosphates. The polypeptide is 5'-nucleotidase SurE (Syntrophomonas wolfei subsp. wolfei (strain DSM 2245B / Goettingen)).